A 100-amino-acid chain; its full sequence is MEEASEGGGNDRVRNLQSEVEGVKNIMTQNVERILARGENLEHLRNKTEDLEATSEHFKTTSQKVARKFWWKNVKMIVLICVIVFIIILFIVLFATGAFS.

At Met-1 the chain carries N-acetylmethionine. Residues 1–75 lie on the Cytoplasmic side of the membrane; sequence MEEASEGGGN…ARKFWWKNVK (75 aa). Phosphoserine is present on residues Ser-5 and Ser-18. The region spanning 12 to 72 is the v-SNARE coiled-coil homology domain; it reads RVRNLQSEVE…QKVARKFWWK (61 aa). 3 positions are modified to phosphothreonine: Thr-28, Thr-48, and Thr-54. Position 55 is a phosphoserine (Ser-55). 2 (Microbial infection) N6-stearoyl lysine lipidation sites follow: Lys-64 and Lys-68. The chain crosses the membrane as a helical; Anchor for type IV membrane protein span at residues 76-96; that stretch reads MIVLICVIVFIIILFIVLFAT. Topologically, residues 97–100 are vesicular; sequence GAFS.

The protein belongs to the synaptobrevin family. As to quaternary structure, forms a SNARE complex composed of VAMP8, SNAP29 and STX17 involved in fusion of autophagosome with lysosome. Found in a number of SNARE complexes with NAPA, SNAP23, SNAP25, STX1A, STX4, STX7, STX8 and VTI1B. Interacts with PICALM. SNARE complex formation and binding by PICALM are mutually exclusive processes for VAMP8. Interacts with SBF2/MTMR13. Interacts with RAB21 (in GTP-bound form) in response to starvation; the interaction probably regulates VAMP8 endolysosomal trafficking. Interacts with STX17; this interaction is increased in the absence of TMEM39A. Interacts with TRIM6. In terms of assembly, (Microbial infection) The interaction with STX17 is decreased in presence of SARS coronavirus-2/SARS-CoV-2 ORF3A protein. In terms of processing, (Microbial infection) Stearoylated By S.flexneri N-epsilon-fatty acyltransferase IcsB, thereby disrupting the host actin cytoskeleton. As to expression, platelets.

The protein localises to the lysosome membrane. The protein resides in the early endosome membrane. It is found in the late endosome membrane. Its subcellular location is the cell membrane. It localises to the zymogen granule membrane. Functionally, SNAREs, soluble N-ethylmaleimide-sensitive factor-attachment protein receptors, are essential proteins for fusion of cellular membranes. SNAREs localized on opposing membranes assemble to form a trans-SNARE complex, an extended, parallel four alpha-helical bundle that drives membrane fusion. VAMP8 is a SNARE involved in autophagy through the direct control of autophagosome membrane fusion with the lysososome membrane via its interaction with the STX17-SNAP29 binary t-SNARE complex. Also required for dense-granule secretion in platelets. Also plays a role in regulated enzyme secretion in pancreatic acinar cells. Involved in the abscission of the midbody during cell division, which leads to completely separate daughter cells. Involved in the homotypic fusion of early and late endosomes. Also participates in the activation of type I interferon antiviral response through a TRIM6-dependent mechanism. The sequence is that of Vesicle-associated membrane protein 8 from Homo sapiens (Human).